The primary structure comprises 209 residues: Large ribosomal subunit protein uL3 (209 aa).

Belongs to the universal ribosomal protein uL3 family. As to quaternary structure, part of the 50S ribosomal subunit. Forms a cluster with proteins L14 and L19.

In terms of biological role, one of the primary rRNA binding proteins, it binds directly near the 3'-end of the 23S rRNA, where it nucleates assembly of the 50S subunit. In Moorella thermoacetica (strain ATCC 39073 / JCM 9320), this protein is Large ribosomal subunit protein uL3.